A 513-amino-acid chain; its full sequence is Cytochrome P450 1A2 (513 aa).

O-linked (GlcNAc) serine glycosylation occurs at serine 68. Phenylalanine 225 serves as a coordination point for substrate. Position 456 (cysteine 456) interacts with heme.

Belongs to the cytochrome P450 family. In terms of assembly, interacts with PGRMC1; the interaction requires PGRMC1 homodimerization. Heme serves as cofactor.

It localises to the endoplasmic reticulum membrane. The protein resides in the microsome membrane. The catalysed reaction is an organic molecule + reduced [NADPH--hemoprotein reductase] + O2 = an alcohol + oxidized [NADPH--hemoprotein reductase] + H2O + H(+). It carries out the reaction 17beta-estradiol + reduced [NADPH--hemoprotein reductase] + O2 = 2-hydroxy-17beta-estradiol + oxidized [NADPH--hemoprotein reductase] + H2O + H(+). The enzyme catalyses 17beta-estradiol + reduced [NADPH--hemoprotein reductase] + O2 = 4-hydroxy-17beta-estradiol + oxidized [NADPH--hemoprotein reductase] + H2O + H(+). It catalyses the reaction estrone + reduced [NADPH--hemoprotein reductase] + O2 = 2-hydroxyestrone + oxidized [NADPH--hemoprotein reductase] + H2O + H(+). The catalysed reaction is estrone + reduced [NADPH--hemoprotein reductase] + O2 = 4-hydroxyestrone + oxidized [NADPH--hemoprotein reductase] + H2O + H(+). It carries out the reaction cholesterol + reduced [NADPH--hemoprotein reductase] + O2 = 25-hydroxycholesterol + oxidized [NADPH--hemoprotein reductase] + H2O + H(+). The enzyme catalyses all-trans-retinol + reduced [NADPH--hemoprotein reductase] + O2 = all-trans-retinal + oxidized [NADPH--hemoprotein reductase] + 2 H2O + H(+). It catalyses the reaction all-trans-retinal + reduced [NADPH--hemoprotein reductase] + O2 = all-trans-retinoate + oxidized [NADPH--hemoprotein reductase] + H2O + 2 H(+). The catalysed reaction is (5Z,8Z,11Z,14Z)-eicosatetraenoate + reduced [NADPH--hemoprotein reductase] + O2 = (14R,15S)-epoxy-(5Z,8Z,11Z)-eicosatrienoate + oxidized [NADPH--hemoprotein reductase] + H2O + H(+). It carries out the reaction (5Z,8Z,11Z,14Z)-eicosatetraenoate + reduced [NADPH--hemoprotein reductase] + O2 = (14S,15R)-epoxy-(5Z,8Z,11Z)-eicosatrienoate + oxidized [NADPH--hemoprotein reductase] + H2O + H(+). The enzyme catalyses (5Z,8Z,11Z,14Z,17Z)-eicosapentaenoate + reduced [NADPH--hemoprotein reductase] + O2 = (17R,18S)-epoxy-(5Z,8Z,11Z,14Z)-eicosatetraenoate + oxidized [NADPH--hemoprotein reductase] + H2O + H(+). It catalyses the reaction (4Z,7Z,10Z,13Z,16Z,19Z)-docosahexaenoate + reduced [NADPH--hemoprotein reductase] + O2 = (19R,20S)-epoxy-(4Z,7Z,10Z,13Z,16Z)-docosapentaenoate + oxidized [NADPH--hemoprotein reductase] + H2O + H(+). The catalysed reaction is (5S)-hydroperoxy-(6E,8Z,11Z,14Z)-eicosatetraenoate = 5-oxo-(6E,8Z,11Z,14Z)-eicosatetraenoate + H2O. It carries out the reaction (12S)-hydroperoxy-(5Z,8Z,10E,14Z)-eicosatetraenoate = 12-oxo-(5Z,8Z,10E,14Z)-eicosatetraenoate + H2O. The enzyme catalyses (15S)-hydroperoxy-(5Z,8Z,11Z,13E)-eicosatetraenoate = 15-oxo-(5Z,8Z,11Z,13E)-eicosatetraenoate + H2O. It catalyses the reaction (13S)-hydroperoxy-(9Z,11E)-octadecadienoate = 13-oxo-(9Z,11E)-octadecadienoate + H2O. The catalysed reaction is (5Z,8Z,11Z,14Z)-eicosatetraenoate + reduced [NADPH--hemoprotein reductase] + O2 = 13-hydroxy-(5Z,8Z,11Z,14Z)-eicosatetraenoate + oxidized [NADPH--hemoprotein reductase] + H2O + H(+). It carries out the reaction (5Z,8Z,11Z,14Z)-eicosatetraenoate + reduced [NADPH--hemoprotein reductase] + O2 = 19-hydroxy-(5Z,8Z,11Z,14Z)-eicosatetraenoate + oxidized [NADPH--hemoprotein reductase] + H2O + H(+). The enzyme catalyses (9Z,12Z)-octadecadienoate + reduced [NADPH--hemoprotein reductase] + O2 = 11-hydroxy-(9Z,12Z)-octadecadienoate + oxidized [NADPH--hemoprotein reductase] + H2O + H(+). It participates in cofactor metabolism; retinol metabolism. Its pathway is steroid metabolism; cholesterol metabolism. The protein operates within lipid metabolism; arachidonate metabolism. A cytochrome P450 monooxygenase involved in the metabolism of various endogenous substrates, including fatty acids, steroid hormones and vitamins. Mechanistically, uses molecular oxygen inserting one oxygen atom into a substrate, and reducing the second into a water molecule, with two electrons provided by NADPH via cytochrome P450 reductase (NADPH--hemoprotein reductase). Catalyzes the hydroxylation of carbon-hydrogen bonds. Exhibits high catalytic activity for the formation of hydroxyestrogens from estrone (E1) and 17beta-estradiol (E2), namely 2-hydroxy E1 and E2. Metabolizes cholesterol toward 25-hydroxycholesterol, a physiological regulator of cellular cholesterol homeostasis. May act as a major enzyme for all-trans retinoic acid biosynthesis in the liver. Catalyzes two successive oxidative transformation of all-trans retinol to all-trans retinal and then to the active form all-trans retinoic acid. Primarily catalyzes stereoselective epoxidation of the last double bond of polyunsaturated fatty acids (PUFA), displaying a strong preference for the (R,S) stereoisomer. Catalyzes bisallylic hydroxylation and omega-1 hydroxylation of PUFA. May also participate in eicosanoids metabolism by converting hydroperoxide species into oxo metabolites (lipoxygenase-like reaction, NADPH-independent). Plays a role in the oxidative metabolism of xenobiotics. Catalyzes the N-hydroxylation of heterocyclic amines and the O-deethylation of phenacetin. Metabolizes caffeine via N3-demethylation. The protein is Cytochrome P450 1A2 (Cyp1a2) of Mus musculus (Mouse).